Here is a 200-residue protein sequence, read N- to C-terminus: Small ribosomal subunit protein uS4 (200 aa).

The tract at residues T22–K43 is disordered. The region spanning S92 to K152 is the S4 RNA-binding domain.

The protein belongs to the universal ribosomal protein uS4 family. In terms of assembly, part of the 30S ribosomal subunit. Contacts protein S5. The interaction surface between S4 and S5 is involved in control of translational fidelity.

Its function is as follows. One of the primary rRNA binding proteins, it binds directly to 16S rRNA where it nucleates assembly of the body of the 30S subunit. With S5 and S12 plays an important role in translational accuracy. The chain is Small ribosomal subunit protein uS4 from Geobacillus sp. (strain WCH70).